The chain runs to 485 residues: 3-isopropylmalate dehydratase large subunit (485 aa).

Disordered regions lie at residues 1–20 (MSDA…QSTG) and 73–92 (PERT…RSLP). [4Fe-4S] cluster-binding residues include Cys364, Cys424, and Cys427.

This sequence belongs to the aconitase/IPM isomerase family. LeuC type 1 subfamily. As to quaternary structure, heterodimer of LeuC and LeuD. [4Fe-4S] cluster is required as a cofactor.

The enzyme catalyses (2R,3S)-3-isopropylmalate = (2S)-2-isopropylmalate. Its pathway is amino-acid biosynthesis; L-leucine biosynthesis; L-leucine from 3-methyl-2-oxobutanoate: step 2/4. Catalyzes the isomerization between 2-isopropylmalate and 3-isopropylmalate, via the formation of 2-isopropylmaleate. The chain is 3-isopropylmalate dehydratase large subunit from Rhodopirellula baltica (strain DSM 10527 / NCIMB 13988 / SH1).